The primary structure comprises 582 residues: ATP-dependent lipid A-core flippase (582 aa).

A run of 5 helical transmembrane segments spans residues 25 to 45 (WFML…QAGA), 64 to 84 (VLIV…GQFM), 142 to 162 (AIIV…FLLW), 165 to 185 (WKLT…MNIT), and 253 to 273 (VIVQ…YIHL). In terms of domain architecture, ABC transmembrane type-1 spans 29 to 309 (VISVIGYALY…LTDVNVKVQR (281 aa)). One can recognise an ABC transporter domain in the interval 342-577 (IDFEGVSFGY…NGLYTQMYRM (236 aa)). 375–382 (GRSGAGKS) is an ATP binding site.

The protein belongs to the ABC transporter superfamily. Lipid exporter (TC 3.A.1.106) family. In terms of assembly, homodimer.

It localises to the cell inner membrane. It carries out the reaction ATP + H2O + lipid A-core oligosaccharideSide 1 = ADP + phosphate + lipid A-core oligosaccharideSide 2.. Its function is as follows. Involved in lipopolysaccharide (LPS) biosynthesis. Translocates lipid A-core from the inner to the outer leaflet of the inner membrane. Transmembrane domains (TMD) form a pore in the inner membrane and the ATP-binding domain (NBD) is responsible for energy generation. This Alcanivorax borkumensis (strain ATCC 700651 / DSM 11573 / NCIMB 13689 / SK2) protein is ATP-dependent lipid A-core flippase.